Reading from the N-terminus, the 495-residue chain is MVNLRPDEISSMIRQQIEQFSQQVQFNHVGTVMQVGDGIARVYGLNDVMAGELLEFADGTIGIALNLESDHVGAVLMGDGRNILEGSEVKSSGQIAQVPVGEELLGRVVNALVQPIDGKGGIETKQTRLIESPAPGIVARQSVCEPLQTGITAIDAMIPIGRGQRELIIGDRQTGKTAIALDTIINQKNEDVICVYVAIGQKASSVAAAVNLLATKGAMDYTIVVTANADDAASLQYLAPYTGAAIAEHFMYQGKATLVIYDDLTKQAQAYRQMSLLLRRPPGREAYPGDVFYLHSRLLERAAKLNKELGGGSMTALPIVETQAGDVSAYIPTNVISITDGQIFLSSDLFNAGIRPAINVGISVSRVGSAAQIQSMKKVAGRLKLELAQFDELQAFSQFASDLDKATQMQLARGQRLREVLKQSQASPIPIEEQIAMIYAGVNGWLDKLALEEVQPFLSRVRSELRTSNYPSAVKSKWSEEVEQMLKDVLSKHAQ.

170–177 (GDRQTGKT) contributes to the ATP binding site.

The protein belongs to the ATPase alpha/beta chains family. As to quaternary structure, F-type ATPases have 2 components, CF(1) - the catalytic core - and CF(0) - the membrane proton channel. CF(1) has five subunits: alpha(3), beta(3), gamma(1), delta(1), epsilon(1). CF(0) has four main subunits: a, b, b' and c.

It is found in the plastid. Its subcellular location is the chloroplast thylakoid membrane. It carries out the reaction ATP + H2O + 4 H(+)(in) = ADP + phosphate + 5 H(+)(out). Functionally, produces ATP from ADP in the presence of a proton gradient across the membrane. The alpha chain is a regulatory subunit. The protein is ATP synthase subunit alpha, chloroplastic of Cyanidioschyzon merolae (strain NIES-3377 / 10D) (Unicellular red alga).